The primary structure comprises 520 residues: AMP-binding domain-containing enzyme iboA (520 aa).

180–191 (LTSGSTSGSPKV) is a binding site for ATP. Positions 397–447 (DGNFHTGDLFEKQLDGSYLFRGRGDDWIKSEDSRFIDTKAIEEKINDVCSD) match the FACS motif.

It belongs to the ATP-dependent AMP-binding enzyme family. Requires Mg(2+) as cofactor.

The protein operates within secondary metabolite biosynthesis. Its function is as follows. AMP-binding domain-containing enzyme; part of the gene cluster that mediates the biosynthesis of the psychoactive metabolites ibotenic acid and muscimol. The first committed step is glutamate hydroxylation by the 2-oxoglutarate-dependent dioxygenase iboH, and the last step is decarboxylation of ibotenic acid to muscimol by the decarboxylase iboD. The order of the intermediate reactions is somewhat ambiguous. IboA likely activates the carboxylic acid at position 5 to introduce an amide bond, and the flavin monooxygenase iboF generates the N-O bond. There are several options for the latter step. One option is that iboF directly hydroxylates the amide nitrogen formed by iboA to produce a hydroxamic acid species. Another option is that iboF hydroxylates an external N-containing compound, whose resulting N-O bond is subsequently introduced into the hydroxyglutamate scaffold. The paralogous PLP-dependent cystathionine gamma-synthase-like enzymes iboG1 and iboG2 are likely involved in substitution of the OH group at position 3 by the O-N moiety. The first cyclic intermediate is most probably tricholomic acid which is likely desaturated to ibotenic acid by the cytochrome P450 monooxygenase iboC. The sequence is that of AMP-binding domain-containing enzyme iboA from Amanita muscaria (strain Koide BX008).